We begin with the raw amino-acid sequence, 131 residues long: Small ribosomal subunit protein eS24 (131 aa).

The interval 93–131 (RHGLYEKKKTSRKQRKERKNRMKKVRGTKKASVGAAGKK) is disordered. Residues 101-121 (KTSRKQRKERKNRMKKVRGTK) are compositionally biased toward basic residues.

It belongs to the eukaryotic ribosomal protein eS24 family. Component of the small ribosomal subunit. Part of the small subunit (SSU) processome, composed of more than 70 proteins and the RNA chaperone small nucleolar RNA (snoRNA) U3.

The protein resides in the cytoplasm. It localises to the nucleus. Its subcellular location is the nucleolus. Its function is as follows. Component of the small ribosomal subunit. The ribosome is a large ribonucleoprotein complex responsible for the synthesis of proteins in the cell. Required for processing of pre-rRNA and maturation of 40S ribosomal subunits. Part of the small subunit (SSU) processome, first precursor of the small eukaryotic ribosomal subunit. During the assembly of the SSU processome in the nucleolus, many ribosome biogenesis factors, an RNA chaperone and ribosomal proteins associate with the nascent pre-rRNA and work in concert to generate RNA folding, modifications, rearrangements and cleavage as well as targeted degradation of pre-ribosomal RNA by the RNA exosome. This is Small ribosomal subunit protein eS24 (rps24) from Ictalurus punctatus (Channel catfish).